Consider the following 219-residue polypeptide: Proteasome subunit beta type-9 (219 aa).

The propeptide at 1–20 (MLQAGAPTAGSFRTGEVHTG) is removed in mature form. Residue threonine 21 is the Nucleophile of the active site. N6-acetyllysine is present on residues lysine 53 and lysine 109.

It belongs to the peptidase T1B family. The 26S proteasome consists of a 20S proteasome core and two 19S regulatory subunits. The 20S proteasome core is composed of 28 subunits that are arranged in four stacked rings, resulting in a barrel-shaped structure. The two end rings are each formed by seven alpha subunits, and the two central rings are each formed by seven beta subunits. The catalytic chamber with the active sites is on the inside of the barrel. Component of the immunoproteasome, where it displaces the equivalent housekeeping subunit PSMB6. Component of the spermatoproteasome, a form of the proteasome specifically found in testis. Interacts with NCOA2 and NCOA3. Autocleaved. The resulting N-terminal Thr residue of the mature subunit is responsible for the nucleophile proteolytic activity. Detected in the cytoplasmic lobe of elongated spermatids, in residual bodies, and in the acrosomal cap of round spermatids.

The protein localises to the cytoplasm. Its subcellular location is the nucleus. The catalysed reaction is Cleavage of peptide bonds with very broad specificity.. Functionally, the proteasome is a multicatalytic proteinase complex which is characterized by its ability to cleave peptides with Arg, Phe, Tyr, Leu, and Glu adjacent to the leaving group at neutral or slightly basic pH. The proteasome has an ATP-dependent proteolytic activity. This subunit is involved in antigen processing to generate class I binding peptides. This Rattus norvegicus (Rat) protein is Proteasome subunit beta type-9 (Psmb9).